A 512-amino-acid chain; its full sequence is Flavonoid 3'-monooxygenase (512 aa).

A helical membrane pass occupies residues 1–21 (MEILSLILYTVIFSFLLQFIL). The Cytoplasmic portion of the chain corresponds to 22 to 512 (RSFFRKRYPL…PRLEAQAYIG (491 aa)). Residue Cys-447 coordinates heme.

Belongs to the cytochrome P450 family. It depends on heme as a cofactor. High expression in petals and ovaries and to a lower extent in sepals, pedicels, anthers and stems. Not detected in leaves, style or roots.

The protein localises to the endoplasmic reticulum membrane. It catalyses the reaction a 3'-unsubstituted flavone + reduced [NADPH--hemoprotein reductase] + O2 = a 3'-hydroxyflavone + oxidized [NADPH--hemoprotein reductase] + H2O + H(+). It participates in secondary metabolite biosynthesis; flavonoid biosynthesis. In terms of biological role, catalyzes the 3'-hydroxylation of the flavonoid B-ring to the 3',4'-hydroxylated state. Convert naringenin to eriodictyol and dihydrokaempferol to dihydroquercetin. In Petunia hybrida (Petunia), this protein is Flavonoid 3'-monooxygenase (CYP75B2).